Reading from the N-terminus, the 355-residue chain is LIM/homeobox protein lim-4 (355 aa).

2 consecutive LIM zinc-binding domains span residues 96–155 and 166–228; these read VICT…THVT and PKCA…LVEG. The segment at residues 239–298 is a DNA-binding region (homeobox); it reads TKRVRTTFAEDQLSVLQTYFNRDSNPDGADLEKIASMTGLSKRVTQVWFQNSRARQKKWH. The segment at 291–336 is disordered; sequence RARQKKWHQKSEGDNGDSQRSSVGPSSPSQKSDSSSEMMYPTSVTT. A compositionally biased stretch (low complexity) spans 306–326; it reads GDSQRSSVGPSSPSQKSDSSS.

Interacts with transcription factor sox-2. Expressed in the AWB sensory neurons and in one RME motor neuron (RMEV), two RMD motor neurons (RMDL and RMDR), the RID, RIV, SAA and SIA interneurons and the SMB sensory/inter/motor neurons.

It localises to the nucleus. In terms of biological role, transcription factor that binds to the promoter of target genes. Regulates genes involved in serotonin synthesis and release in serotonergic ADF neurons. Involved in specification of neuron cell fate, olfactory receptor expression, locomotion, and foraging behavior. Required in AWB olfactory neurons to repress AWC cell fate and promote the AWB cell fate during early development. Cooperates with additional factors to direct the differentiation of the olfactory neurons, functioning with the transcription factor sox-2 to suppress AWC terminal differentiation and promote AWB neuron differentiation. Involved in regulating terminal specification and maintenance of the SMB sensory/inter/motor neurons. Plays a role in regulation of RID motor neuron differentiation, but is dispensable for motor axon outgrowth in the dorsal nerve cord. May regulate its own expression. The protein is LIM/homeobox protein lim-4 of Caenorhabditis elegans.